The chain runs to 70 residues: MIYKVLFQADKTQSPLREATKSLYLEANSAVEARQLVEDNTPYNIEFVQELTGEHLAYEQESEDFKLTEF.

It belongs to the RNA polymerase subunit epsilon family. As to quaternary structure, RNAP is composed of a core of 2 alpha, a beta and a beta' subunit. The core is associated with a delta subunit, and at least one of epsilon or omega. When a sigma factor is associated with the core the holoenzyme is formed, which can initiate transcription.

The enzyme catalyses RNA(n) + a ribonucleoside 5'-triphosphate = RNA(n+1) + diphosphate. Its function is as follows. A non-essential component of RNA polymerase (RNAP). The sequence is that of DNA-directed RNA polymerase subunit epsilon from Latilactobacillus sakei subsp. sakei (strain 23K) (Lactobacillus sakei subsp. sakei).